The following is a 50-amino-acid chain: uncharacterized protein (50 aa).

This is an uncharacterized protein from Sinorhizobium fredii (strain NBRC 101917 / NGR234).